The primary structure comprises 386 residues: Bifunctional enzyme IspD/IspF (386 aa).

Residues 1-231 (MKNGAVIIPA…REKKEPMQKI (231 aa)) are 2-C-methyl-D-erythritol 4-phosphate cytidylyltransferase. The interval 232-386 (RIGHGFDAHQ…SCHAVVLLQQ (155 aa)) is 2-C-methyl-D-erythritol 2,4-cyclodiphosphate synthase. A divalent metal cation is bound by residues Asp-238 and His-240. 4-CDP-2-C-methyl-D-erythritol 2-phosphate contacts are provided by residues 238–240 (DAH) and 264–265 (HS). His-272 serves as a coordination point for a divalent metal cation. 4-CDP-2-C-methyl-D-erythritol 2-phosphate-binding positions include 286-288 (DIG), 362-365 (TTTE), Tyr-369, and Arg-372.

It in the N-terminal section; belongs to the IspD/TarI cytidylyltransferase family. IspD subfamily. The protein in the C-terminal section; belongs to the IspF family. It depends on a divalent metal cation as a cofactor.

It carries out the reaction 2-C-methyl-D-erythritol 4-phosphate + CTP + H(+) = 4-CDP-2-C-methyl-D-erythritol + diphosphate. It catalyses the reaction 4-CDP-2-C-methyl-D-erythritol 2-phosphate = 2-C-methyl-D-erythritol 2,4-cyclic diphosphate + CMP. It participates in isoprenoid biosynthesis; isopentenyl diphosphate biosynthesis via DXP pathway; isopentenyl diphosphate from 1-deoxy-D-xylulose 5-phosphate: step 2/6. Its pathway is isoprenoid biosynthesis; isopentenyl diphosphate biosynthesis via DXP pathway; isopentenyl diphosphate from 1-deoxy-D-xylulose 5-phosphate: step 4/6. Its function is as follows. Bifunctional enzyme that catalyzes the formation of 4-diphosphocytidyl-2-C-methyl-D-erythritol from CTP and 2-C-methyl-D-erythritol 4-phosphate (MEP) (IspD), and catalyzes the conversion of 4-diphosphocytidyl-2-C-methyl-D-erythritol 2-phosphate (CDP-ME2P) to 2-C-methyl-D-erythritol 2,4-cyclodiphosphate (ME-CPP) with a corresponding release of cytidine 5-monophosphate (CMP) (IspF). In Desulfotalea psychrophila (strain LSv54 / DSM 12343), this protein is Bifunctional enzyme IspD/IspF.